Consider the following 300-residue polypeptide: Tyrosine recombinase XerC (300 aa).

The Core-binding (CB) domain occupies 2-88 (IQEGKLEQQF…SLRSFYTFLL (87 aa)). The Tyr recombinase domain occupies 109–294 (RLPKFFYSEE…TKEHLKSTYM (186 aa)). Residues Arg-150, Lys-174, His-246, Arg-249, and His-272 contribute to the active site. Tyr-281 (O-(3'-phospho-DNA)-tyrosine intermediate) is an active-site residue.

This sequence belongs to the 'phage' integrase family. XerC subfamily. As to quaternary structure, forms a cyclic heterotetrameric complex composed of two molecules of XerC and two molecules of XerD.

It localises to the cytoplasm. Functionally, site-specific tyrosine recombinase, which acts by catalyzing the cutting and rejoining of the recombining DNA molecules. The XerC-XerD complex is essential to convert dimers of the bacterial chromosome into monomers to permit their segregation at cell division. It also contributes to the segregational stability of plasmids. This chain is Tyrosine recombinase XerC, found in Listeria monocytogenes serotype 4b (strain F2365).